The primary structure comprises 219 residues: MSHYRQRFLQLALDSNALCFGEFTLKSGRISPYFFNAGHFNSGAKTAALAQCYADAIDAANMNFDLVFGPAYKGIPLATALACEYARRERDLLLAFNRKEVKNHGEGGTLIGAPLNGRKILIIDDVITAGTAIREVLRIIRNAGGTPTGIAVALNRQEIASETNRQSSVQALMAETGIPVVAIATLSDLLAFVEENASLAKFYEPLLAYKTHYGTEASD.

Lysine 26 provides a ligand contact to 5-phospho-alpha-D-ribose 1-diphosphate. 34–35 (FF) lines the orotate pocket. Residues 72–73 (YK), arginine 98, lysine 99, lysine 102, histidine 104, and 124–132 (DDVITAGTA) each bind 5-phospho-alpha-D-ribose 1-diphosphate. Orotate contacts are provided by threonine 128 and arginine 156.

The protein belongs to the purine/pyrimidine phosphoribosyltransferase family. PyrE subfamily. As to quaternary structure, homodimer. The cofactor is Mg(2+).

The enzyme catalyses orotidine 5'-phosphate + diphosphate = orotate + 5-phospho-alpha-D-ribose 1-diphosphate. Its pathway is pyrimidine metabolism; UMP biosynthesis via de novo pathway; UMP from orotate: step 1/2. Catalyzes the transfer of a ribosyl phosphate group from 5-phosphoribose 1-diphosphate to orotate, leading to the formation of orotidine monophosphate (OMP). The chain is Orotate phosphoribosyltransferase from Xylella fastidiosa (strain 9a5c).